We begin with the raw amino-acid sequence, 233 residues long: MKHNLNAHEARVIGCLLEKQVTTPEQYPMSLNGLTLACNQKTSRDPVMELSESQVQQTLDFLLKKHLIRSQSGNRVMKYEHRFCNSEFGDLKFSPAEVAVITLLLLRGAQTPGELRTRTNRMYEFADVAETEETLKTLSLREDGPFVVRLAREPGKRESRFMPLFSGDVASSLLAAGEAEEDNHTLEANPRETHSFENIALEKTALEARVAQLEQQVIQLSRRLDDVLIQLDD.

The protein belongs to the UPF0502 family.

This is UPF0502 protein YPTS_2082 from Yersinia pseudotuberculosis serotype IB (strain PB1/+).